Reading from the N-terminus, the 862-residue chain is Protein translocase subunit SecA (862 aa).

Residues Gln88, Gly106 to Thr110, and Asp506 contribute to the ATP site. Cys839, Cys841, Cys850, and His851 together coordinate Zn(2+).

It belongs to the SecA family. As to quaternary structure, monomer and homodimer. Part of the essential Sec protein translocation apparatus which comprises SecA, SecYEG and auxiliary proteins SecDF-YajC and YidC. It depends on Zn(2+) as a cofactor.

It is found in the cell inner membrane. The protein resides in the cytoplasm. It catalyses the reaction ATP + H2O + cellular proteinSide 1 = ADP + phosphate + cellular proteinSide 2.. Functionally, part of the Sec protein translocase complex. Interacts with the SecYEG preprotein conducting channel. Has a central role in coupling the hydrolysis of ATP to the transfer of proteins into and across the cell membrane, serving as an ATP-driven molecular motor driving the stepwise translocation of polypeptide chains across the membrane. The sequence is that of Protein translocase subunit SecA from Campylobacter jejuni (strain RM1221).